Reading from the N-terminus, the 938-residue chain is Bifunctional glutamine synthetase adenylyltransferase/adenylyl-removing enzyme (938 aa).

The adenylyl removase stretch occupies residues 1–457 (MLEADAARLK…HFDHVFGDPS (457 aa)). The tract at residues 460–938 (AHTLDSMWAA…ALWTIVFGSA (479 aa)) is adenylyl transferase.

The protein belongs to the GlnE family. Requires Mg(2+) as cofactor.

It catalyses the reaction [glutamine synthetase]-O(4)-(5'-adenylyl)-L-tyrosine + phosphate = [glutamine synthetase]-L-tyrosine + ADP. The catalysed reaction is [glutamine synthetase]-L-tyrosine + ATP = [glutamine synthetase]-O(4)-(5'-adenylyl)-L-tyrosine + diphosphate. Involved in the regulation of glutamine synthetase GlnA, a key enzyme in the process to assimilate ammonia. When cellular nitrogen levels are high, the C-terminal adenylyl transferase (AT) inactivates GlnA by covalent transfer of an adenylyl group from ATP to specific tyrosine residue of GlnA, thus reducing its activity. Conversely, when nitrogen levels are low, the N-terminal adenylyl removase (AR) activates GlnA by removing the adenylyl group by phosphorolysis, increasing its activity. The regulatory region of GlnE binds the signal transduction protein PII (GlnB) which indicates the nitrogen status of the cell. In Aromatoleum aromaticum (strain DSM 19018 / LMG 30748 / EbN1) (Azoarcus sp. (strain EbN1)), this protein is Bifunctional glutamine synthetase adenylyltransferase/adenylyl-removing enzyme.